The sequence spans 253 residues: tRNA uridine(34) hydroxylase (253 aa).

In terms of domain architecture, Rhodanese spans 127 to 221; sequence RGRPLVLLDT…YFEEVGGEGY (95 aa). The active-site Cysteine persulfide intermediate is the Cys-181.

Belongs to the TrhO family.

It carries out the reaction uridine(34) in tRNA + AH2 + O2 = 5-hydroxyuridine(34) in tRNA + A + H2O. Catalyzes oxygen-dependent 5-hydroxyuridine (ho5U) modification at position 34 in tRNAs. This is tRNA uridine(34) hydroxylase from Xanthomonas oryzae pv. oryzae (strain MAFF 311018).